A 155-amino-acid polypeptide reads, in one-letter code: 6,7-dimethyl-8-ribityllumazine synthase (155 aa).

5-amino-6-(D-ribitylamino)uracil-binding positions include F23, 57–59 (AYE), and 81–83 (AVI). 86–87 (AT) contacts (2S)-2-hydroxy-3-oxobutyl phosphate. The active-site Proton donor is the H89. Residue F114 participates in 5-amino-6-(D-ribitylamino)uracil binding. R128 contributes to the (2S)-2-hydroxy-3-oxobutyl phosphate binding site.

It belongs to the DMRL synthase family.

It carries out the reaction (2S)-2-hydroxy-3-oxobutyl phosphate + 5-amino-6-(D-ribitylamino)uracil = 6,7-dimethyl-8-(1-D-ribityl)lumazine + phosphate + 2 H2O + H(+). It participates in cofactor biosynthesis; riboflavin biosynthesis; riboflavin from 2-hydroxy-3-oxobutyl phosphate and 5-amino-6-(D-ribitylamino)uracil: step 1/2. Its function is as follows. Catalyzes the formation of 6,7-dimethyl-8-ribityllumazine by condensation of 5-amino-6-(D-ribitylamino)uracil with 3,4-dihydroxy-2-butanone 4-phosphate. This is the penultimate step in the biosynthesis of riboflavin. In Desulfotalea psychrophila (strain LSv54 / DSM 12343), this protein is 6,7-dimethyl-8-ribityllumazine synthase.